Consider the following 100-residue polypeptide: Urease subunit gamma (100 aa).

It belongs to the urease gamma subunit family. As to quaternary structure, heterotrimer of UreA (gamma), UreB (beta) and UreC (alpha) subunits. Three heterotrimers associate to form the active enzyme.

Its subcellular location is the cytoplasm. It carries out the reaction urea + 2 H2O + H(+) = hydrogencarbonate + 2 NH4(+). Its pathway is nitrogen metabolism; urea degradation; CO(2) and NH(3) from urea (urease route): step 1/1. The protein is Urease subunit gamma of Bacillus sp. (strain TB-90).